Consider the following 257-residue polypeptide: Aspartate/glutamate leucyltransferase (257 aa).

It belongs to the R-transferase family. Bpt subfamily.

Its subcellular location is the cytoplasm. It carries out the reaction N-terminal L-glutamyl-[protein] + L-leucyl-tRNA(Leu) = N-terminal L-leucyl-L-glutamyl-[protein] + tRNA(Leu) + H(+). The enzyme catalyses N-terminal L-aspartyl-[protein] + L-leucyl-tRNA(Leu) = N-terminal L-leucyl-L-aspartyl-[protein] + tRNA(Leu) + H(+). Functions in the N-end rule pathway of protein degradation where it conjugates Leu from its aminoacyl-tRNA to the N-termini of proteins containing an N-terminal aspartate or glutamate. The polypeptide is Aspartate/glutamate leucyltransferase (Nitrobacter hamburgensis (strain DSM 10229 / NCIMB 13809 / X14)).